The following is a 252-amino-acid chain: Ubiquinone biosynthesis O-methyltransferase (252 aa).

The S-adenosyl-L-methionine site is built by Arg-45, Gly-76, Asp-97, and Met-141.

This sequence belongs to the methyltransferase superfamily. UbiG/COQ3 family.

The catalysed reaction is a 3-demethylubiquinol + S-adenosyl-L-methionine = a ubiquinol + S-adenosyl-L-homocysteine + H(+). It catalyses the reaction a 3-(all-trans-polyprenyl)benzene-1,2-diol + S-adenosyl-L-methionine = a 2-methoxy-6-(all-trans-polyprenyl)phenol + S-adenosyl-L-homocysteine + H(+). It participates in cofactor biosynthesis; ubiquinone biosynthesis. O-methyltransferase that catalyzes the 2 O-methylation steps in the ubiquinone biosynthetic pathway. This chain is Ubiquinone biosynthesis O-methyltransferase, found in Caulobacter sp. (strain K31).